Reading from the N-terminus, the 248-residue chain is tRNA pseudouridine synthase A 2 (248 aa).

D55 acts as the Nucleophile in catalysis. Y113 is a substrate binding site.

Belongs to the tRNA pseudouridine synthase TruA family. Homodimer.

The catalysed reaction is uridine(38/39/40) in tRNA = pseudouridine(38/39/40) in tRNA. Functionally, formation of pseudouridine at positions 38, 39 and 40 in the anticodon stem and loop of transfer RNAs. In Clostridium tetani (strain Massachusetts / E88), this protein is tRNA pseudouridine synthase A 2.